Consider the following 418-residue polypeptide: Serine/threonine transporter SstT (418 aa).

Helical transmembrane passes span isoleucine 21–alanine 41, phenylalanine 49–isoleucine 69, isoleucine 83–phenylalanine 103, alanine 142–leucine 162, phenylalanine 190–alanine 210, leucine 217–valine 237, methionine 299–isoleucine 319, and valine 331–isoleucine 351.

It belongs to the dicarboxylate/amino acid:cation symporter (DAACS) (TC 2.A.23) family.

The protein localises to the cell inner membrane. The catalysed reaction is L-serine(in) + Na(+)(in) = L-serine(out) + Na(+)(out). It carries out the reaction L-threonine(in) + Na(+)(in) = L-threonine(out) + Na(+)(out). Involved in the import of serine and threonine into the cell, with the concomitant import of sodium (symport system). This Yersinia pestis bv. Antiqua (strain Antiqua) protein is Serine/threonine transporter SstT.